We begin with the raw amino-acid sequence, 758 residues long: 5-methyltetrahydropteroyltriglutamate--homocysteine methyltransferase (758 aa).

5-methyltetrahydropteroyltri-L-glutamate-binding positions include Arg-17–Lys-20 and Lys-117. Residues Ile-434–Ser-436 and Glu-487 contribute to the L-homocysteine site. Residues Ile-434 to Ser-436 and Glu-487 contribute to the L-methionine site. 5-methyltetrahydropteroyltri-L-glutamate-binding positions include Arg-518 to Cys-519 and Trp-564. Residue Asp-602 participates in L-homocysteine binding. Asp-602 is a binding site for L-methionine. 5-methyltetrahydropteroyltri-L-glutamate is bound at residue Glu-608. 3 residues coordinate Zn(2+): His-644, Cys-646, and Glu-668. The Proton donor role is filled by His-697. Residue Cys-729 coordinates Zn(2+).

It belongs to the vitamin-B12 independent methionine synthase family. The cofactor is Zn(2+).

The catalysed reaction is 5-methyltetrahydropteroyltri-L-glutamate + L-homocysteine = tetrahydropteroyltri-L-glutamate + L-methionine. Its pathway is amino-acid biosynthesis; L-methionine biosynthesis via de novo pathway; L-methionine from L-homocysteine (MetE route): step 1/1. Its function is as follows. Catalyzes the transfer of a methyl group from 5-methyltetrahydrofolate to homocysteine resulting in methionine formation. The chain is 5-methyltetrahydropteroyltriglutamate--homocysteine methyltransferase from Yersinia enterocolitica serotype O:8 / biotype 1B (strain NCTC 13174 / 8081).